Consider the following 201-residue polypeptide: Recombination protein RecR (201 aa).

Residues Cys60–Cys75 form a C4-type zinc finger. A Toprim domain is found at Thr83–Pro178.

It belongs to the RecR family.

Functionally, may play a role in DNA repair. It seems to be involved in an RecBC-independent recombinational process of DNA repair. It may act with RecF and RecO. The sequence is that of Recombination protein RecR from Bartonella quintana (strain Toulouse) (Rochalimaea quintana).